We begin with the raw amino-acid sequence, 395 residues long: Succinate--CoA ligase [ADP-forming] subunit beta (395 aa).

In terms of domain architecture, ATP-grasp spans 9 to 240 (RDVFEKHGVP…AASADPLEAK (232 aa)). ATP is bound by residues K49, 56–58 (GRG), A98, and E103. Positions 195 and 209 each coordinate Mg(2+). Substrate contacts are provided by residues N260 and 322-324 (GIT).

The protein belongs to the succinate/malate CoA ligase beta subunit family. In terms of assembly, heterotetramer of two alpha and two beta subunits. Mg(2+) is required as a cofactor.

It catalyses the reaction succinate + ATP + CoA = succinyl-CoA + ADP + phosphate. The catalysed reaction is GTP + succinate + CoA = succinyl-CoA + GDP + phosphate. It participates in carbohydrate metabolism; tricarboxylic acid cycle; succinate from succinyl-CoA (ligase route): step 1/1. Its function is as follows. Succinyl-CoA synthetase functions in the citric acid cycle (TCA), coupling the hydrolysis of succinyl-CoA to the synthesis of either ATP or GTP and thus represents the only step of substrate-level phosphorylation in the TCA. The beta subunit provides nucleotide specificity of the enzyme and binds the substrate succinate, while the binding sites for coenzyme A and phosphate are found in the alpha subunit. The polypeptide is Succinate--CoA ligase [ADP-forming] subunit beta (Beutenbergia cavernae (strain ATCC BAA-8 / DSM 12333 / CCUG 43141 / JCM 11478 / NBRC 16432 / NCIMB 13614 / HKI 0122)).